A 517-amino-acid chain; its full sequence is Membrane-bound lytic murein transglycosylase F (517 aa).

The first 32 residues, 1–32 (MKKFKINYLLIGIVTLLLAAALWPSIPWFGKA), serve as a signal peptide directing secretion. The segment at 33–269 (ENRIAAIQSR…RLEEKYLGHG (237 aa)) is non-LT domain. Positions 270 to 517 (GDFDYVDTRS…PNTLVQAPRR (248 aa)) are LT domain. E314 is a catalytic residue.

This sequence in the N-terminal section; belongs to the bacterial solute-binding protein 3 family. The protein in the C-terminal section; belongs to the transglycosylase Slt family.

It localises to the cell outer membrane. It carries out the reaction Exolytic cleavage of the (1-&gt;4)-beta-glycosidic linkage between N-acetylmuramic acid (MurNAc) and N-acetylglucosamine (GlcNAc) residues in peptidoglycan, from either the reducing or the non-reducing ends of the peptidoglycan chains, with concomitant formation of a 1,6-anhydrobond in the MurNAc residue.. Its function is as follows. Murein-degrading enzyme that degrades murein glycan strands and insoluble, high-molecular weight murein sacculi, with the concomitant formation of a 1,6-anhydromuramoyl product. Lytic transglycosylases (LTs) play an integral role in the metabolism of the peptidoglycan (PG) sacculus. Their lytic action creates space within the PG sacculus to allow for its expansion as well as for the insertion of various structures such as secretion systems and flagella. The protein is Membrane-bound lytic murein transglycosylase F of Enterobacter sp. (strain 638).